The chain runs to 79 residues: Protein S100-G (79 aa).

The residue at position 2 (Ser2) is an N-acetylserine. EF-hand domains lie at 13 to 48 (IFEKYAAKEGDPDQLSKEELKLLIQNELPALLKGSS) and 45 to 79 (KGSSSIDDLFKELDKNGDGEVSFEEFQVLVKKISQ). 2 residues coordinate Ca(2+): Gln26 and Glu31. Ser47 is modified (phosphoserine). Ca(2+) contacts are provided by Asp58, Asn60, Asp62, Glu64, and Glu69.

This sequence belongs to the S-100 family.

The protein is Protein S100-G (S100G) of Equus caballus (Horse).